The sequence spans 218 residues: Probable nicotinate-nucleotide adenylyltransferase (218 aa).

It belongs to the NadD family.

The enzyme catalyses nicotinate beta-D-ribonucleotide + ATP + H(+) = deamido-NAD(+) + diphosphate. It participates in cofactor biosynthesis; NAD(+) biosynthesis; deamido-NAD(+) from nicotinate D-ribonucleotide: step 1/1. Its function is as follows. Catalyzes the reversible adenylation of nicotinate mononucleotide (NaMN) to nicotinic acid adenine dinucleotide (NaAD). This is Probable nicotinate-nucleotide adenylyltransferase from Burkholderia lata (strain ATCC 17760 / DSM 23089 / LMG 22485 / NCIMB 9086 / R18194 / 383).